Here is an 833-residue protein sequence, read N- to C-terminus: Leucine--tRNA ligase (833 aa).

Positions 41–52 (PYPSGAGLHVGH) match the 'HIGH' region motif. The 'KMSKS' region motif lies at 610–614 (KMSKS). K613 lines the ATP pocket.

The protein belongs to the class-I aminoacyl-tRNA synthetase family.

Its subcellular location is the cytoplasm. The catalysed reaction is tRNA(Leu) + L-leucine + ATP = L-leucyl-tRNA(Leu) + AMP + diphosphate. The sequence is that of Leucine--tRNA ligase from Streptococcus pyogenes serotype M18 (strain MGAS8232).